The primary structure comprises 353 residues: Chorismate synthase (353 aa).

NADP(+)-binding residues include arginine 48 and arginine 54. FMN is bound by residues 125–127, 238–239, glycine 278, 293–297, and arginine 319; these read RSS, NA, and KPTSS.

It belongs to the chorismate synthase family. As to quaternary structure, homotetramer. FMNH2 serves as cofactor.

The catalysed reaction is 5-O-(1-carboxyvinyl)-3-phosphoshikimate = chorismate + phosphate. The protein operates within metabolic intermediate biosynthesis; chorismate biosynthesis; chorismate from D-erythrose 4-phosphate and phosphoenolpyruvate: step 7/7. In terms of biological role, catalyzes the anti-1,4-elimination of the C-3 phosphate and the C-6 proR hydrogen from 5-enolpyruvylshikimate-3-phosphate (EPSP) to yield chorismate, which is the branch point compound that serves as the starting substrate for the three terminal pathways of aromatic amino acid biosynthesis. This reaction introduces a second double bond into the aromatic ring system. The protein is Chorismate synthase of Bordetella pertussis (strain Tohama I / ATCC BAA-589 / NCTC 13251).